A 77-amino-acid polypeptide reads, in one-letter code: MDFNFIEFLGYMATFFVAASFLFKSIVHLRIVNSIGAILFVIYSLIITAYPVALLNAFLVVVNIYQLWRLKQENLSK.

A run of 2 helical transmembrane segments spans residues 3–23 (FNFI…SFLF) and 35–55 (IGAI…VALL).

The protein resides in the cell membrane. This is an uncharacterized protein from Haemophilus influenzae (strain ATCC 51907 / DSM 11121 / KW20 / Rd).